Reading from the N-terminus, the 396-residue chain is Cyclic GMP-AMP synthase-like receptor (396 aa).

Residues serine 63 and 75-77 (EFD) contribute to the ATP site. Positions 75, 77, and 194 each coordinate Mg(2+). Aspartate 194 is a binding site for GTP. Residues 241–244 (QEQE), lysine 262, and 275–279 (SYYLK) each bind ATP. Valine 286, glutamate 287, and aspartate 292 together coordinate Mn(2+). Residues 376–396 (IMNGGNPQQSANAENGSCLSM) are disordered. Polar residues predominate over residues 380-396 (GNPQQSANAENGSCLSM).

Belongs to the mab-21 family. Requires Mg(2+) as cofactor. Mn(2+) serves as cofactor.

The catalysed reaction is GTP + ATP = 2',3'-cGAMP + 2 diphosphate. It carries out the reaction GTP + ATP = pppGp(2'-5')A + diphosphate. The enzyme catalyses pppGp(2'-5')A = 2',3'-cGAMP + diphosphate. Nucleotidyltransferase that catalyzes the formation of cyclic GMP-AMP (2',3'-cGAMP) from ATP and GTP and plays a key role in innate immunity. Acts as a key sensor of double-stranded RNA (dsRNA), the presence of dsRNA in the cytoplasm being a danger signal that triggers the immune responses. Directly binds dsRNA, activating the nucleotidyltransferase activity, leading to synthesis of 2',3'-cGAMP, a second messenger that binds to and activates Sting, thereby triggering the immune response via activation of the NF-kappa-B transcription factor. The protein is Cyclic GMP-AMP synthase-like receptor of Aethina tumida (Small hive beetle).